A 217-amino-acid polypeptide reads, in one-letter code: Probable disulfide bond formation protein D (217 aa).

The first 28 residues, 1-28 (MKSSNKLMALGIVFSIAVLIVIGTIVYS), serve as a signal peptide directing secretion. Cys-66 and Cys-69 are disulfide-bonded.

The protein belongs to the thioredoxin family. DsbA subfamily.

In terms of biological role, may be required for disulfide bond formation in some proteins. This chain is Probable disulfide bond formation protein D (bdbD), found in Bacillus anthracis.